A 199-amino-acid chain; its full sequence is Small ribosomal subunit protein uS2 (199 aa).

This sequence belongs to the universal ribosomal protein uS2 family.

This chain is Small ribosomal subunit protein uS2 (rps2), found in Thermoplasma volcanium (strain ATCC 51530 / DSM 4299 / JCM 9571 / NBRC 15438 / GSS1).